The sequence spans 467 residues: Multiple inositol polyphosphate phosphatase 1 (467 aa).

The N-terminal stretch at 1–15 (MRLLILLLLPLVAIA) is a signal peptide. Histidine 67 is an active-site residue. N-linked (GlcNAc...) asparagine glycosylation is found at asparagine 120, asparagine 159, and asparagine 234. A lipid anchor (GPI-anchor amidated glycine) is attached at glycine 441. The propeptide at 442-467 (GAPSLGSGVGGLLATTLAAMLVYLMH) is removed in mature form.

This sequence belongs to the histidine acid phosphatase family. MINPP1 subfamily. In terms of processing, N-glycosylated.

It is found in the cell membrane. The protein localises to the apical cell membrane. The protein resides in the basolateral cell membrane. Its subcellular location is the cell projection. It localises to the filopodium. It is found in the cell junction. The catalysed reaction is (2R)-2,3-bisphosphoglycerate + H2O = (2R)-2-phosphoglycerate + phosphate. It carries out the reaction 1D-myo-inositol hexakisphosphate + H2O = 1D-myo-inositol 1,2,4,5,6-pentakisphosphate + phosphate. It catalyses the reaction 1D-myo-inositol 1,2,4,5,6-pentakisphosphate + H2O = 1D-myo-inositol 1,2,5,6-tetrakisphosphate + phosphate. The enzyme catalyses 1D-myo-inositol 1,2,5,6-tetrakisphosphate + H2O = 1D-myo-inositol 1,2,6-trisphosphate + phosphate. Probable multiple inositol polyphosphate phosphatase that hydrolyzes 1D-myo-inositol 1,3,4,5,6-pentakisphosphate (InsP5[2OH]) and 1D-myo-inositol hexakisphosphate (InsP6) to a range of less phosphorylated inositol phosphates. This regulates the availability of these various small molecule second messengers and metal chelators which control many aspects of cell physiology. May have a dual substrate specificity, and function as a 2,3-bisphosphoglycerate 3-phosphatase hydrolyzing 2,3-bisphosphoglycerate to 2-phosphoglycerate. 2,3-bisphosphoglycerate (BPG) is formed as part of the Rapoport-Luebering glycolytic bypass. Has a role in embryonic tracheal development where it localizes to the leading edge of actively migrating branches. In these leading cells, enhances formation and/or maintenance of filopodia which may drive branch migration and elongation by cell-cell intercalation. The function in tracheal morphogenesis is dependent on its inositol polyphosphate phosphatase activity. The chain is Multiple inositol polyphosphate phosphatase 1 from Drosophila melanogaster (Fruit fly).